Here is a 221-residue protein sequence, read N- to C-terminus: uncharacterized protein (221 aa).

5 consecutive transmembrane segments (helical) span residues 2–22 (FIAK…FFFV), 34–54 (LLTL…LAQA), 97–117 (AYGL…SNVI), 131–151 (ALDQ…FMGI), and 177–197 (ILWP…LQVI).

It belongs to the peroxisomal membrane protein PXMP2/4 family.

The protein resides in the membrane. This is an uncharacterized protein from Schizosaccharomyces pombe (strain 972 / ATCC 24843) (Fission yeast).